We begin with the raw amino-acid sequence, 732 residues long: Polyribonucleotide nucleotidyltransferase (732 aa).

Mg(2+)-binding residues include D502 and D508. Positions 569 to 628 constitute a KH domain; it reads PRLTSIQIPVDAIGMVIGKGGETIRSITEETGAEINIDDDGTVTIACSSPEGTKAAVETI. One can recognise an S1 motif domain in the interval 638 to 712; sequence GTIYMGKVRD…GKTKFALSIK (75 aa).

This sequence belongs to the polyribonucleotide nucleotidyltransferase family. The cofactor is Mg(2+).

Its subcellular location is the cytoplasm. The catalysed reaction is RNA(n+1) + phosphate = RNA(n) + a ribonucleoside 5'-diphosphate. Its function is as follows. Involved in mRNA degradation. Catalyzes the phosphorolysis of single-stranded polyribonucleotides processively in the 3'- to 5'-direction. The chain is Polyribonucleotide nucleotidyltransferase from Chlorobaculum parvum (strain DSM 263 / NCIMB 8327) (Chlorobium vibrioforme subsp. thiosulfatophilum).